Consider the following 253-residue polypeptide: Tryptophan synthase alpha chain (253 aa).

Catalysis depends on proton acceptor residues Glu46 and Asp57.

This sequence belongs to the TrpA family. As to quaternary structure, tetramer of two alpha and two beta chains.

It catalyses the reaction (1S,2R)-1-C-(indol-3-yl)glycerol 3-phosphate + L-serine = D-glyceraldehyde 3-phosphate + L-tryptophan + H2O. The protein operates within amino-acid biosynthesis; L-tryptophan biosynthesis; L-tryptophan from chorismate: step 5/5. In terms of biological role, the alpha subunit is responsible for the aldol cleavage of indoleglycerol phosphate to indole and glyceraldehyde 3-phosphate. The polypeptide is Tryptophan synthase alpha chain (Dictyoglomus turgidum (strain DSM 6724 / Z-1310)).